We begin with the raw amino-acid sequence, 338 residues long: MENLDALVSQALEAVQSAEDINALEQIRVHYLGKKGELTQVMKTLGNLPAEERPHVGALINVAKERVTEVLNARKASFEQAELTAKLAAECIDVTLPGRGQTSGGLHPITRTLERIEQFFTHIGYGIAEGPEVEDDYHNFEALNIPGHHPARSMHDTFYFNANMLLRTHTSPVQVRTMESQQPPIRIVCPGRVYRSDSDITHSPMFHQIEGLLVDRDINFADLKGTIEEFLRVFFEKELAVRFRPSYFPFTEPSAEVDMECVMCSGKGCRVCKQTGWLEVMGCGMVHPNVLRMSGIDPEEFQGFAFGMGVERLAMLRYGVNDLRLFFDNDLRFLAQFR.

A Mg(2+)-binding site is contributed by Glu252.

The protein belongs to the class-II aminoacyl-tRNA synthetase family. Phe-tRNA synthetase alpha subunit type 1 subfamily. Tetramer of two alpha and two beta subunits. The cofactor is Mg(2+).

The protein resides in the cytoplasm. It carries out the reaction tRNA(Phe) + L-phenylalanine + ATP = L-phenylalanyl-tRNA(Phe) + AMP + diphosphate + H(+). This is Phenylalanine--tRNA ligase alpha subunit from Pseudomonas syringae pv. tomato (strain ATCC BAA-871 / DC3000).